A 293-amino-acid polypeptide reads, in one-letter code: Small ribosomal subunit biogenesis GTPase RsgA (293 aa).

Residues 63-223 enclose the CP-type G domain; it reads KNELVRPPIA…VADTPGFSSL (161 aa). Residues 112–115 and 166–174 each bind GTP; these read SKMD and GQSGVGKSS. 4 residues coordinate Zn(2+): cysteine 247, cysteine 252, histidine 254, and cysteine 260.

It belongs to the TRAFAC class YlqF/YawG GTPase family. RsgA subfamily. In terms of assembly, monomer. Associates with 30S ribosomal subunit, binds 16S rRNA. Zn(2+) serves as cofactor.

Its subcellular location is the cytoplasm. Its function is as follows. One of several proteins that assist in the late maturation steps of the functional core of the 30S ribosomal subunit. Helps release RbfA from mature subunits. May play a role in the assembly of ribosomal proteins into the subunit. Circularly permuted GTPase that catalyzes slow GTP hydrolysis, GTPase activity is stimulated by the 30S ribosomal subunit. This Bacillus anthracis protein is Small ribosomal subunit biogenesis GTPase RsgA.